A 436-amino-acid polypeptide reads, in one-letter code: uncharacterized protein (436 aa).

A helical membrane pass occupies residues 1–21 (MILLQVICTIWTCLFIPLLNA). 2 BNR repeats span residues 57–68 (WISSDSGENWEA) and 101–112 (YVTDDRGKSWRA). Asn157 carries N-linked (GlcNAc...) asparagine glycosylation. BNR repeat units follow at residues 229 to 240 (ALSTDGGKTFKK) and 394 to 405 (KISVDNGLTWSN).

It localises to the membrane. This is an uncharacterized protein from Saccharomyces cerevisiae (strain ATCC 204508 / S288c) (Baker's yeast).